The following is a 258-amino-acid chain: UPF0246 protein ACIAD2218 (258 aa).

This sequence belongs to the UPF0246 family.

This is UPF0246 protein ACIAD2218 from Acinetobacter baylyi (strain ATCC 33305 / BD413 / ADP1).